Consider the following 542-residue polypeptide: uncharacterized protein (542 aa).

A run of 5 helical transmembrane segments spans residues 4-23, 28-47, 57-79, 86-108, and 151-173; these read ILRD…GYPL, IGGI…AFGA, IVYQ…HGFL, GVIY…LIPH, and PVVG…IYLA. RCK C-terminal domains follow at residues 186–270 and 273–356; these read RTLK…VIGC and EVQA…LGDS. 6 consecutive transmembrane segments (helical) span residues 365–384, 389–408, 415–437, 457–479, 484–506, and 519–541; these read IAVL…VPIP, ITVR…FLGA, LVWV…IFLA, WAIL…YVGY, IPMG…LGFA, and YAMV…IAVL.

It belongs to the AAE transporter (TC 2.A.81) family.

It is found in the cell membrane. This is an uncharacterized protein from Symbiobacterium thermophilum (strain DSM 24528 / JCM 14929 / IAM 14863 / T).